We begin with the raw amino-acid sequence, 126 residues long: Holo-[acyl-carrier-protein] synthase (126 aa).

Mg(2+) is bound by residues Asp-9 and Glu-58.

This sequence belongs to the P-Pant transferase superfamily. AcpS family. Mg(2+) is required as a cofactor.

It is found in the cytoplasm. The catalysed reaction is apo-[ACP] + CoA = holo-[ACP] + adenosine 3',5'-bisphosphate + H(+). Functionally, transfers the 4'-phosphopantetheine moiety from coenzyme A to a Ser of acyl-carrier-protein. The polypeptide is Holo-[acyl-carrier-protein] synthase (Erwinia tasmaniensis (strain DSM 17950 / CFBP 7177 / CIP 109463 / NCPPB 4357 / Et1/99)).